The primary structure comprises 1009 residues: DNA ligase 3 (1009 aa).

The transit peptide at 1–42 (MSLAFKIFFPQTLRALSRKELCLFRKHHWRDVRQFSQWSETD) directs the protein to the mitochondrion. The PARP-type zinc-finger motif lies at 93–185 (FCVDYAKRGT…QITQHIADLS (93 aa)). Positions 105, 108, 139, and 142 each coordinate Zn(2+). A phosphoserine mark is found at serine 210, serine 216, serine 227, and serine 242. The interval 224–256 (RKFSGFSAKPNNSGEAPSSPTPKRSLSSSKCDP) is disordered. Over residues 240–252 (PSSPTPKRSLSSS) the composition is skewed to low complexity. Interaction with DNA stretches follow at residues 277 to 280 (PSYN), 318 to 323 (VYNLND), 388 to 391 (TKED), and 421 to 427 (KMNSGAK). An ATP-binding site is contributed by glutamate 506. Lysine 508 functions as the N6-AMP-lysine intermediate in the catalytic mechanism. Residues arginine 513 and arginine 528 each contribute to the ATP site. Glutamate 560 and glutamate 655 together coordinate Mg(2+). The ATP site is built by lysine 660, arginine 671, and lysine 675. Positions 842–917 (AGDEGSSTTG…LATKSSPVKV (76 aa)) are disordered. Low complexity-rich tracts occupy residues 845 to 854 (EGSSTTGGSS) and 863 to 877 (SAVS…SAST). Positions 884–898 (LSNSNSKDGNMQTAK) are enriched in polar residues. Position 913 is a phosphoserine (serine 913). A BRCT domain is found at 933–1009 (VLLDIFTGVR…IRKRRLVAPC (77 aa)).

It belongs to the ATP-dependent DNA ligase family. In terms of assembly, isoform 3 interacts (via BRCT domain) with the nuclear DNA-repair protein XRCC1. Interacts with POLG. Interacts with POLB. Mg(2+) is required as a cofactor. As to expression, testis, thymus, prostate and heart.

Its subcellular location is the mitochondrion. It is found in the nucleus. The enzyme catalyses ATP + (deoxyribonucleotide)n-3'-hydroxyl + 5'-phospho-(deoxyribonucleotide)m = (deoxyribonucleotide)n+m + AMP + diphosphate.. Its function is as follows. Isoform 3 functions as a heterodimer with DNA-repair protein XRCC1 in the nucleus and can correct defective DNA strand-break repair and sister chromatid exchange following treatment with ionizing radiation and alkylating agents. Isoform 1 is targeted to mitochondria, where it functions as a DNA ligase in mitochondrial base-excision DNA repair. This is DNA ligase 3 (LIG3) from Homo sapiens (Human).